A 423-amino-acid polypeptide reads, in one-letter code: Ornithine cyclodeaminase (423 aa).

NAD(+)-binding residues include Asn-241, Ala-242, Asp-320, Thr-352, Met-353, Leu-354, His-355, Asp-373, Asp-396, and Val-397.

It belongs to the AgrE/ArgZ ornithine cyclodeaminase family. NAD(+) serves as cofactor.

The enzyme catalyses L-ornithine = L-proline + NH4(+). Its function is as follows. Catalyzes the conversion of ornithine to proline, with the release of ammonia. This is Ornithine cyclodeaminase from Methanocaldococcus jannaschii (strain ATCC 43067 / DSM 2661 / JAL-1 / JCM 10045 / NBRC 100440) (Methanococcus jannaschii).